We begin with the raw amino-acid sequence, 450 residues long: tRNA-2-methylthio-N(6)-dimethylallyladenosine synthase (450 aa).

The 121-residue stretch at 7-127 (KKVFIKTYGC…LPDVLARVRG (121 aa)) folds into the MTTase N-terminal domain. 6 residues coordinate [4Fe-4S] cluster: C16, C52, C90, C168, C172, and C175. In terms of domain architecture, Radical SAM core spans 154–388 (IKRGVTAFLT…LLLKQQQGFG (235 aa)). The 62-residue stretch at 389-450 (SSLVGSTIDT…GYNSLFAELA (62 aa)) folds into the TRAM domain.

This sequence belongs to the methylthiotransferase family. MiaB subfamily. As to quaternary structure, monomer. The cofactor is [4Fe-4S] cluster.

The protein resides in the cytoplasm. It catalyses the reaction N(6)-dimethylallyladenosine(37) in tRNA + (sulfur carrier)-SH + AH2 + 2 S-adenosyl-L-methionine = 2-methylsulfanyl-N(6)-dimethylallyladenosine(37) in tRNA + (sulfur carrier)-H + 5'-deoxyadenosine + L-methionine + A + S-adenosyl-L-homocysteine + 2 H(+). Catalyzes the methylthiolation of N6-(dimethylallyl)adenosine (i(6)A), leading to the formation of 2-methylthio-N6-(dimethylallyl)adenosine (ms(2)i(6)A) at position 37 in tRNAs that read codons beginning with uridine. The sequence is that of tRNA-2-methylthio-N(6)-dimethylallyladenosine synthase from Mesorhizobium japonicum (strain LMG 29417 / CECT 9101 / MAFF 303099) (Mesorhizobium loti (strain MAFF 303099)).